Here is a 179-residue protein sequence, read N- to C-terminus: uncharacterized protein (179 aa).

The segment covering 1–14 (MTKKVKLDQDEINN) has biased composition (basic and acidic residues). Disordered stretches follow at residues 1-90 (MTKK…NNFC) and 121-147 (HKKS…DKKV). 2 stretches are compositionally biased toward low complexity: residues 15-90 (KNKN…NNFC) and 126-137 (RSQSQSSLNSFD). Positions 138–147 (QDNKSKDKKV) are enriched in basic and acidic residues.

This is an uncharacterized protein from Dictyostelium discoideum (Social amoeba).